Reading from the N-terminus, the 464-residue chain is Fumarate hydratase class II (464 aa).

Residues 97–99, 128–131, 138–140, and T186 contribute to the substrate site; these read SGT, HPND, and SSN. Catalysis depends on H187, which acts as the Proton donor/acceptor. The active site involves S317. Residues S318 and 323-325 contribute to the substrate site; that span reads KVN.

It belongs to the class-II fumarase/aspartase family. Fumarase subfamily. In terms of assembly, homotetramer.

Its subcellular location is the cytoplasm. The enzyme catalyses (S)-malate = fumarate + H2O. It participates in carbohydrate metabolism; tricarboxylic acid cycle; (S)-malate from fumarate: step 1/1. In terms of biological role, involved in the TCA cycle. Catalyzes the stereospecific interconversion of fumarate to L-malate. The protein is Fumarate hydratase class II of Leptospira interrogans serogroup Icterohaemorrhagiae serovar copenhageni (strain Fiocruz L1-130).